The sequence spans 272 residues: Catabolic 3-dehydroquinate dehydratase (272 aa).

Residues 66–68 (EFR) and R102 each bind 3-dehydroquinate. H163 (proton donor/acceptor) is an active-site residue. The active-site Schiff-base intermediate with substrate is the K190. 3 residues coordinate 3-dehydroquinate: R232, S251, and Q255.

It belongs to the type-I 3-dehydroquinase family.

It carries out the reaction 3-dehydroquinate = 3-dehydroshikimate + H2O. It functions in the pathway aromatic compound metabolism; 3,4-dihydroxybenzoate biosynthesis; 3,4-dihydroxybenzoate from 3-dehydroquinate: step 1/2. In terms of biological role, involved in the biosynthesis of protocatechuate. Catalyzes the catabolic dehydration of 3-dehydroquinate (DHQ) to yield 3-dehydroshikimate. This Acinetobacter baylyi (strain ATCC 33305 / BD413 / ADP1) protein is Catabolic 3-dehydroquinate dehydratase.